A 200-amino-acid polypeptide reads, in one-letter code: Recombination protein RecR (200 aa).

The segment at 59–74 adopts a C4-type zinc-finger fold; it reads CDICGNVCETSPCPVC. The region spanning 82 to 177 is the Toprim domain; the sequence is SVICVVEEPK…KVTRLASGLP (96 aa).

This sequence belongs to the RecR family.

In terms of biological role, may play a role in DNA repair. It seems to be involved in an RecBC-independent recombinational process of DNA repair. It may act with RecF and RecO. This is Recombination protein RecR from Bifidobacterium adolescentis (strain ATCC 15703 / DSM 20083 / NCTC 11814 / E194a).